The following is a 103-amino-acid chain: Co-chaperonin GroES (103 aa).

Belongs to the GroES chaperonin family. As to quaternary structure, heptamer of 7 subunits arranged in a ring. Interacts with the chaperonin GroEL.

It is found in the cytoplasm. Functionally, together with the chaperonin GroEL, plays an essential role in assisting protein folding. The GroEL-GroES system forms a nano-cage that allows encapsulation of the non-native substrate proteins and provides a physical environment optimized to promote and accelerate protein folding. GroES binds to the apical surface of the GroEL ring, thereby capping the opening of the GroEL channel. The protein is Co-chaperonin GroES of Synechocystis sp. (strain ATCC 27184 / PCC 6803 / Kazusa).